The sequence spans 1220 residues: Myosin-2 (1220 aa).

Positions 1–12 (MMLSASPNTLAK) are enriched in polar residues. Disordered stretches follow at residues 1–54 (MMLS…ARRS) and 68–95 (QNGS…RKEK). Residues 20–33 (ESLRQKDECDRPKD) show a composition bias toward basic and acidic residues. Residues 40–54 (SRPNSRARLPSARRS) are compositionally biased toward low complexity. Over residues 82–95 (ESERKEEGVKRKEK) the composition is skewed to basic and acidic residues. The Myosin N-terminal SH3-like domain occupies 160–209 (KKKLRVWCRVSNGQWQLGKIQSTSADTSLVMLSTANVVKVSTEELFPANP). The 667-residue stretch at 213–879 (EGVEDLIQLS…QIGIFEDRRK (667 aa)) folds into the Myosin motor domain. ATP contacts are provided by residues 304–311 (GESGAGKT) and 353–361 (NANSSRFGK). 2 actin-binding regions span residues 638–672 (LIEK…KQHL) and 759–781 (LFKL…KPNS). IQ domains are found at residues 881–910 (VLQG…VTLV), 904–933 (MRKV…FHAD), and 942–971 (ELSA…QKEL). Disordered regions lie at residues 968 to 1007 (QKEL…MSDL) and 1075 to 1118 (SITG…NGNT). Composition is skewed to polar residues over residues 997 to 1006 (PQVQPTSMSD) and 1098 to 1118 (TMST…NGNT). A coiled-coil region spans residues 1003 to 1071 (SMSDLQKRIL…MSLAAARKSL (69 aa)).

It belongs to the TRAFAC class myosin-kinesin ATPase superfamily. Myosin family. Plant myosin class VIII subfamily. As to quaternary structure, homodimer. Expressed in flowers, leaves and roots.

It localises to the cell junction. Its subcellular location is the plasmodesma. The protein resides in the endosome. Its function is as follows. Myosin heavy chain that is required for the cell cycle-regulated transport of various organelles and proteins for their segregation. Functions by binding with its tail domain to receptor proteins on organelles and exerting force with its N-terminal motor domain against actin filaments, thereby transporting its cargo along polarized actin cables. Involved in endocytosis via its action in endosomal trafficking. This is Myosin-2 (VIII-2) from Arabidopsis thaliana (Mouse-ear cress).